We begin with the raw amino-acid sequence, 299 residues long: GTPase Era (299 aa).

The Era-type G domain occupies R5 to E172. Residues G13 to S20 form a G1 region. G13–S20 is a GTP binding site. Residues Q39–N43 form a G2 region. The G3 stretch occupies residues D60–G63. GTP is bound by residues D60–I64 and N122–D125. A G4 region spans residues N122–D125. Residues V151–A153 form a G5 region. Positions T203–K280 constitute a KH type-2 domain.

Belongs to the TRAFAC class TrmE-Era-EngA-EngB-Septin-like GTPase superfamily. Era GTPase family. In terms of assembly, monomer.

Its subcellular location is the cytoplasm. The protein localises to the cell membrane. In terms of biological role, an essential GTPase that binds both GDP and GTP, with rapid nucleotide exchange. Plays a role in 16S rRNA processing and 30S ribosomal subunit biogenesis and possibly also in cell cycle regulation and energy metabolism. The protein is GTPase Era of Heliobacterium modesticaldum (strain ATCC 51547 / Ice1).